The chain runs to 432 residues: MSKIVKVIGREIIDSRGNPTVEAEVHLEGGFVGMAAAPSGASTGSREALELRDGDKSRFLGKGVTKAVGAVNGPIAQAIVGKDAKDQAGIDKIMIDLDGTENKSNFGANAILAVSLANAKAAAASKGMPLYEHIAELNGTPGKFSMPVPMMNIINGGEHADNNVDIQEFMIQPVGASSVKEAIRMGSEVFHHLAKVLKGKGMNTAVGDEGGYAPNLGSNAEALAVIAEAVKAAGYELGKDITLAMDCAASEFYKDGKYVLAGEGNKAFTSEEFTHFLEDLTKQYPIVSIEDGLDESDWDGFAYQTKVLGDKIQLVGDDLFVTNTKILKEGIEKGIANSILIKFNQIGSLTETLAAIKMAKDAGYTAVISHRSGETEDATIADLAVGTAAGQIKTGSMSRSDRVAKYNQLIRIEEALGEKAPYNGRREIKGQA.

Gln167 contacts (2R)-2-phosphoglycerate. Glu209 functions as the Proton donor in the catalytic mechanism. 3 residues coordinate Mg(2+): Asp246, Glu290, and Asp317. Positions 342, 371, 372, and 393 each coordinate (2R)-2-phosphoglycerate. Residue Lys342 is the Proton acceptor of the active site.

This sequence belongs to the enolase family. In terms of assembly, component of the RNA degradosome, a multiprotein complex involved in RNA processing and mRNA degradation. The cofactor is Mg(2+).

It localises to the cytoplasm. The protein resides in the secreted. Its subcellular location is the cell surface. It carries out the reaction (2R)-2-phosphoglycerate = phosphoenolpyruvate + H2O. It participates in carbohydrate degradation; glycolysis; pyruvate from D-glyceraldehyde 3-phosphate: step 4/5. Its function is as follows. Catalyzes the reversible conversion of 2-phosphoglycerate (2-PG) into phosphoenolpyruvate (PEP). It is essential for the degradation of carbohydrates via glycolysis. In Cronobacter sakazakii (strain ATCC BAA-894) (Enterobacter sakazakii), this protein is Enolase.